Reading from the N-terminus, the 70-residue chain is Conotoxin ArMKLT2-0111 (70 aa).

The first 22 residues, 1-22 (MKLTCVLIIAVLFLTACQLTTG), serve as a signal peptide directing secretion. Positions 23–40 (EQKDHALRSTDKNSKLTR) are excised as a propeptide. Pyrrolidone carboxylic acid is present on Q41. 3 disulfides stabilise this stretch: C42-C56, C49-C60, and C55-C67.

The protein belongs to the conotoxin O1 superfamily. Expressed by the venom duct.

The protein localises to the secreted. The polypeptide is Conotoxin ArMKLT2-0111 (Conus arenatus (Sand-dusted cone)).